Consider the following 509-residue polypeptide: Ribonuclease Y (509 aa).

Residues 3–23 (WILYVILPAVCIILGWTIRWL) traverse the membrane as a helical segment. Residues 199 to 284 (TVSTVSLPSD…EIVQKVTREI (86 aa)) enclose the KH domain. One can recognise an HD domain in the interval 325-418 (VLQHSKEVAI…VQIADAISAA (94 aa)).

This sequence belongs to the RNase Y family.

It is found in the cell membrane. Functionally, endoribonuclease that initiates mRNA decay. In Treponema denticola (strain ATCC 35405 / DSM 14222 / CIP 103919 / JCM 8153 / KCTC 15104), this protein is Ribonuclease Y.